Here is a 198-residue protein sequence, read N- to C-terminus: DnaJ homolog subfamily C member 5 (198 aa).

Phosphoserine is present on residues Ser-8, Ser-10, Ser-12, and Ser-15. Residues 13–82 enclose the J domain; the sequence is GESLYHVLGL…RNIYDKYGSL (70 aa). A Phosphotyrosine modification is found at Tyr-17. N6-acetyllysine is present on Lys-56. Ser-151 is modified (phosphoserine).

In terms of assembly, oligomers. Homodimer. Interacts with the chaperone complex consisting of HSC70 and SGTA. Interacts with ZDHHC13 (via ANK repeats). Interacts with ZDHHC17 (via ANK repeats). Interacts with SYT1, SYT5 and SYT7, and with SYT9, forming a complex with SNAP25. Post-translationally, ser-10 phosphorylation induces an order-to-disorder transition triggering the interaction with Lys-58. This conformational switch modulates DNAJC5's cellular functions by reducing binding to syntaxin and synaptogamin without altering HSC70 interactions. In terms of processing, palmitoylated. Could be palmitoylated by DHHC3, DHHC7, DHHC15 and DHHC17. Palmitoylation occurs probably in the cysteine-rich domain and regulates DNAJC5 membrane attachment. Expressed in pancreas, kidney, skeletal muscle, liver, lung, placenta, brain and heart.

It is found in the cytoplasm. The protein resides in the cytosol. Its subcellular location is the membrane. It localises to the cytoplasmic vesicle. The protein localises to the secretory vesicle. It is found in the chromaffin granule membrane. The protein resides in the melanosome. Its subcellular location is the cell membrane. In terms of biological role, acts as a general chaperone in regulated exocytosis. Acts as a co-chaperone for the SNARE protein SNAP-25. Involved in the calcium-mediated control of a late stage of exocytosis. May have an important role in presynaptic function. May be involved in calcium-dependent neurotransmitter release at nerve endings. This Homo sapiens (Human) protein is DnaJ homolog subfamily C member 5.